We begin with the raw amino-acid sequence, 252 residues long: Aspartate/glutamate leucyltransferase (252 aa).

This sequence belongs to the R-transferase family. Bpt subfamily.

Its subcellular location is the cytoplasm. The enzyme catalyses N-terminal L-glutamyl-[protein] + L-leucyl-tRNA(Leu) = N-terminal L-leucyl-L-glutamyl-[protein] + tRNA(Leu) + H(+). It catalyses the reaction N-terminal L-aspartyl-[protein] + L-leucyl-tRNA(Leu) = N-terminal L-leucyl-L-aspartyl-[protein] + tRNA(Leu) + H(+). Functions in the N-end rule pathway of protein degradation where it conjugates Leu from its aminoacyl-tRNA to the N-termini of proteins containing an N-terminal aspartate or glutamate. This Agrobacterium fabrum (strain C58 / ATCC 33970) (Agrobacterium tumefaciens (strain C58)) protein is Aspartate/glutamate leucyltransferase.